A 699-amino-acid chain; its full sequence is Fervidolysin (699 aa).

Positions 1 to 21 are cleaved as a signal peptide; the sequence is MRKVLLIASIVALILALFSCA. A propeptide spanning residues 22-149 is cleaved from the precursor; that stretch reads NPSFEPRSKA…MYKIRKPGLN (128 aa). Glu157 provides a ligand contact to Ca(2+). The 303-residue stretch at 163–465 folds into the Peptidase S8 domain; the sequence is LWGLEAIGVT…YGLVKLDAAL (303 aa). Catalysis depends on Asp190, which acts as the Charge relay system. Residue Asp199 participates in Ca(2+) binding. The active-site Charge relay system is the His228. Lys239, Asp241, Lys243, and Ile245 together coordinate Ca(2+). Ser409 (charge relay system) is an active-site residue.

The protein belongs to the peptidase S8 family. In terms of processing, undergoes auto-proteolytic processing. Once cleaved, the propeptide can remain associated with the protease and blocks its activity. The physiological activation of fervidolysin is proposed to be achieved through the stepwise removal of the propeptide accomplished by several proteolytic cleavages that may not be autolytic.

Its subcellular location is the cell surface. Its activity is regulated as follows. Is inhibited by phenylmethylsulfonyl fluoride and 3,4-dichloroisocoumarin. EDTA and iodoacetate (1 to 5 mM) have only little effect on the enzyme activity. Functionally, protease able to degrade keratin into peptides. Is responsible for keratinolysis by F.pennivorans, which allows this bacterium to grow on native feathers. This chain is Fervidolysin, found in Fervidobacterium pennivorans.